A 546-amino-acid chain; its full sequence is Alkaline phosphatase PafA (546 aa).

An N-terminal signal peptide occupies residues 1 to 25 (MLTPKKWLLGVLVVSGMLGAQKTNA). Residues Asp38 and Thr79 each contribute to the Zn(2+) site. The active-site Phosphothreonine intermediate is the Thr79. Substrate is bound by residues Asn100 and 162-164 (KDR). Asp305, His309, Asp352, His353, and His486 together coordinate Zn(2+).

Zn(2+) serves as cofactor.

It localises to the periplasm. It carries out the reaction a phosphate monoester + H2O = an alcohol + phosphate. Its activity is regulated as follows. Strongly inhibited by orthovanadate and EDTA. Also inhibited by inorganic phosphate. Its function is as follows. Alkaline phosphatase with broad substrate specificity. Has phosphatase activity towards nucleotide phosphates with a preference for ATP. Active towards a great variety of phosphomonoesters with the exception of 2',3'-cyclic AMP and myo-inositol hexakisphosphate. In Elizabethkingia meningoseptica (Chryseobacterium meningosepticum), this protein is Alkaline phosphatase PafA.